The primary structure comprises 153 residues: Urease accessory protein UreE (153 aa).

Belongs to the UreE family.

Its subcellular location is the cytoplasm. Its function is as follows. Involved in urease metallocenter assembly. Binds nickel. Probably functions as a nickel donor during metallocenter assembly. The sequence is that of Urease accessory protein UreE from Acetivibrio thermocellus (strain ATCC 27405 / DSM 1237 / JCM 9322 / NBRC 103400 / NCIMB 10682 / NRRL B-4536 / VPI 7372) (Clostridium thermocellum).